A 184-amino-acid chain; its full sequence is MSIMPDHWIRQMATGHGMIEPFVETQKRDGVISYGLSSYGYDARVADEFKIFTNVDSAVVDPKAFSPASFVDRKGPVCIIPPNSFALAHTVEYFRIPRNVLVICLGKSTYARCGIIVNVTPLEPEWEGQVTIEISNTTPLPARIYAGEGICQFLFLRGDSDCETSYADKAGKYMGQRGVSLPRM.

DCTP is bound at residue 107 to 112 (KSTYAR). The active-site Proton donor/acceptor is E133. Residues Q152, Y166, and Q176 each coordinate dCTP.

It belongs to the dCTP deaminase family. In terms of assembly, homotrimer.

The enzyme catalyses dCTP + H2O + H(+) = dUTP + NH4(+). Its pathway is pyrimidine metabolism; dUMP biosynthesis; dUMP from dCTP (dUTP route): step 1/2. Its function is as follows. Catalyzes the deamination of dCTP to dUTP. The polypeptide is dCTP deaminase (Granulibacter bethesdensis (strain ATCC BAA-1260 / CGDNIH1)).